Reading from the N-terminus, the 244-residue chain is Ribosomal RNA small subunit methyltransferase G (244 aa).

S-adenosyl-L-methionine-binding positions include G79, F84, 102–104 (DST), 130–131 (AE), and R149. A disordered region spans residues 225–244 (DRYPRREGVPNQQPLFWSAK). Residues 234 to 244 (PNQQPLFWSAK) show a composition bias toward polar residues.

It belongs to the methyltransferase superfamily. RNA methyltransferase RsmG family.

It localises to the cytoplasm. Its function is as follows. Specifically methylates the N7 position of a guanine in 16S rRNA. This Deinococcus deserti (strain DSM 17065 / CIP 109153 / LMG 22923 / VCD115) protein is Ribosomal RNA small subunit methyltransferase G.